The sequence spans 104 residues: Small ribosomal subunit protein uS10 (104 aa).

Belongs to the universal ribosomal protein uS10 family. Part of the 30S ribosomal subunit.

Involved in the binding of tRNA to the ribosomes. This Ralstonia nicotianae (strain ATCC BAA-1114 / GMI1000) (Ralstonia solanacearum) protein is Small ribosomal subunit protein uS10.